The sequence spans 58 residues: Large ribosomal subunit protein uL30 (58 aa).

This sequence belongs to the universal ribosomal protein uL30 family. Part of the 50S ribosomal subunit.

In Pseudomonas entomophila (strain L48), this protein is Large ribosomal subunit protein uL30.